The following is a 363-amino-acid chain: Ribosomal RNA large subunit methyltransferase M (363 aa).

S-adenosyl-L-methionine is bound by residues serine 194, 227 to 230, aspartate 246, aspartate 266, and aspartate 284; that span reads CPGG. Residue lysine 313 is the Proton acceptor of the active site.

The protein belongs to the class I-like SAM-binding methyltransferase superfamily. RNA methyltransferase RlmE family. RlmM subfamily. Monomer.

It localises to the cytoplasm. It carries out the reaction cytidine(2498) in 23S rRNA + S-adenosyl-L-methionine = 2'-O-methylcytidine(2498) in 23S rRNA + S-adenosyl-L-homocysteine + H(+). Functionally, catalyzes the 2'-O-methylation at nucleotide C2498 in 23S rRNA. The polypeptide is Ribosomal RNA large subunit methyltransferase M (Haemophilus influenzae (strain ATCC 51907 / DSM 11121 / KW20 / Rd)).